Here is a 307-residue protein sequence, read N- to C-terminus: 4-hydroxythreonine-4-phosphate dehydrogenase (307 aa).

Substrate is bound by residues histidine 121 and threonine 122. A divalent metal cation is bound by residues histidine 150, histidine 189, and histidine 246. Substrate contacts are provided by lysine 254, asparagine 263, and arginine 272.

Belongs to the PdxA family. As to quaternary structure, homodimer. The cofactor is Zn(2+). Mg(2+) is required as a cofactor. Co(2+) serves as cofactor.

It is found in the cytoplasm. The catalysed reaction is 4-(phosphooxy)-L-threonine + NAD(+) = 3-amino-2-oxopropyl phosphate + CO2 + NADH. It participates in cofactor biosynthesis; pyridoxine 5'-phosphate biosynthesis; pyridoxine 5'-phosphate from D-erythrose 4-phosphate: step 4/5. In terms of biological role, catalyzes the NAD(P)-dependent oxidation of 4-(phosphooxy)-L-threonine (HTP) into 2-amino-3-oxo-4-(phosphooxy)butyric acid which spontaneously decarboxylates to form 3-amino-2-oxopropyl phosphate (AHAP). The chain is 4-hydroxythreonine-4-phosphate dehydrogenase from Campylobacter fetus subsp. fetus (strain 82-40).